The following is a 110-amino-acid chain: Putative membrane protein insertion efficiency factor (110 aa).

The protein belongs to the UPF0161 family.

The protein localises to the cell inner membrane. Functionally, could be involved in insertion of integral membrane proteins into the membrane. The protein is Putative membrane protein insertion efficiency factor of Campylobacter hominis (strain ATCC BAA-381 / DSM 21671 / CCUG 45161 / LMG 19568 / NCTC 13146 / CH001A).